The chain runs to 260 residues: Hydroxyethylthiazole kinase 1 (260 aa).

Met-39 contacts substrate. The ATP site is built by Arg-115 and Thr-160. Gly-187 is a substrate binding site.

It belongs to the Thz kinase family. It depends on Mg(2+) as a cofactor.

It catalyses the reaction 5-(2-hydroxyethyl)-4-methylthiazole + ATP = 4-methyl-5-(2-phosphooxyethyl)-thiazole + ADP + H(+). It functions in the pathway cofactor biosynthesis; thiamine diphosphate biosynthesis; 4-methyl-5-(2-phosphoethyl)-thiazole from 5-(2-hydroxyethyl)-4-methylthiazole: step 1/1. Its function is as follows. Catalyzes the phosphorylation of the hydroxyl group of 4-methyl-5-beta-hydroxyethylthiazole (THZ). This is Hydroxyethylthiazole kinase 1 from Streptococcus pneumoniae serotype 4 (strain ATCC BAA-334 / TIGR4).